The chain runs to 121 residues: Glycine cleavage system H protein (121 aa).

A Lipoyl-binding domain is found at 16 to 98; the sequence is VATVGITAYA…ESGGWFAKIK (83 aa). Position 57 is an N6-lipoyllysine (Lys57).

The protein belongs to the GcvH family. The glycine cleavage system is composed of four proteins: P, T, L and H. Requires (R)-lipoate as cofactor.

Functionally, the glycine cleavage system catalyzes the degradation of glycine. The H protein shuttles the methylamine group of glycine from the P protein to the T protein. The sequence is that of Glycine cleavage system H protein from Caulobacter vibrioides (strain NA1000 / CB15N) (Caulobacter crescentus).